Reading from the N-terminus, the 415-residue chain is Alpha-1,3/1,6-mannosyltransferase ALG2 (415 aa).

Residues 1–84 (MAENLYRARS…LPRSLGWGGR (84 aa)) are Cytoplasmic-facing. The segment at residues 85-105 (GAAICSYVRMVFLALYVLFLS) is an intramembrane region (helical). Topologically, residues 106–415 (GEEFDVVVCD…QLYQYVTKLV (310 aa)) are cytoplasmic.

The protein belongs to the glycosyltransferase group 1 family. Glycosyltransferase 4 subfamily.

The protein localises to the endoplasmic reticulum membrane. It carries out the reaction a beta-D-Man-(1-&gt;4)-beta-D-GlcNAc-(1-&gt;4)-alpha-D-GlcNAc-diphospho-di-trans,poly-cis-dolichol + GDP-alpha-D-mannose = an alpha-D-Man-(1-&gt;3)-beta-D-Man-(1-&gt;4)-beta-D-GlcNAc-(1-&gt;4)-alpha-D-GlcNAc-diphospho-di-trans,poly-cis-dolichol + GDP + H(+). It catalyses the reaction an alpha-D-Man-(1-&gt;3)-beta-D-Man-(1-&gt;4)-beta-D-GlcNAc-(1-&gt;4)-alpha-D-GlcNAc-diphospho-di-trans,poly-cis-dolichol + GDP-alpha-D-mannose = an alpha-D-Man-(1-&gt;3)-[alpha-D-Man-(1-&gt;6)]-beta-D-Man-(1-&gt;4)-beta-D-GlcNAc-(1-&gt;4)-alpha-D-GlcNAc-diphospho-di-trans,poly-cis-dolichol + GDP + H(+). The enzyme catalyses a beta-D-Man-(1-&gt;4)-beta-D-GlcNAc-(1-&gt;4)-alpha-D-GlcNAc-diphospho-di-trans,poly-cis-dolichol + GDP-alpha-D-mannose = an alpha-D-Man-(1-&gt;6)-beta-D-Man-(1-&gt;4)-beta-D-GlcNAc-(1-&gt;4)-alpha-D-GlcNAc-diphospho-di-trans,poly-cis-dolichol + GDP + H(+). The catalysed reaction is an alpha-D-Man-(1-&gt;6)-beta-D-Man-(1-&gt;4)-beta-D-GlcNAc-(1-&gt;4)-alpha-D-GlcNAc-diphospho-di-trans,poly-cis-dolichol + GDP-alpha-D-mannose = an alpha-D-Man-(1-&gt;3)-[alpha-D-Man-(1-&gt;6)]-beta-D-Man-(1-&gt;4)-beta-D-GlcNAc-(1-&gt;4)-alpha-D-GlcNAc-diphospho-di-trans,poly-cis-dolichol + GDP + H(+). The protein operates within protein modification; protein glycosylation. In terms of biological role, mannosyltransferase that operates in the biosynthetic pathway of dolichol-linked oligosaccharides, the glycan precursors employed in protein asparagine (N)-glycosylation. The assembly of dolichol-linked oligosaccharides begins on the cytosolic side of the endoplasmic reticulum membrane and finishes in its lumen. The sequential addition of sugars to dolichol pyrophosphate produces dolichol-linked oligosaccharides containing fourteen sugars, including two GlcNAcs, nine mannoses and three glucoses. Once assembled, the oligosaccharide is transferred from the lipid to nascent proteins by oligosaccharyltransferases. Catalyzes, on the cytoplasmic face of the endoplasmic reticulum, the addition of the second and third mannose residues to the dolichol-linked oligosaccharide chain, to produce Man3GlcNAc(2)-PP-dolichol core oligosaccharide. Man3GlcNAc(2)-PP-dolichol is a substrate for ALG11, the following enzyme in the biosynthetic pathway. While both alpha 1,3 and alpha 1,6 linkages are possible, the sequential addition of alpha 1,3 followed by alpha 1,6 is probably the preferred route. The protein is Alpha-1,3/1,6-mannosyltransferase ALG2 (Alg2) of Mus musculus (Mouse).